The chain runs to 71 residues: Small ribosomal subunit protein bS21 (71 aa).

The tract at residues glutamate 48–tyrosine 71 is disordered. Residues asparagine 60 to tyrosine 71 show a composition bias toward basic and acidic residues.

It belongs to the bacterial ribosomal protein bS21 family.

In Haemophilus influenzae (strain 86-028NP), this protein is Small ribosomal subunit protein bS21.